Here is a 143-residue protein sequence, read N- to C-terminus: Nucleoside diphosphate kinase (143 aa).

ATP is bound by residues K11, F59, R87, T93, R104, and N114. H117 (pros-phosphohistidine intermediate) is an active-site residue.

It belongs to the NDK family. Homotetramer. It depends on Mg(2+) as a cofactor.

The protein resides in the cytoplasm. The enzyme catalyses a 2'-deoxyribonucleoside 5'-diphosphate + ATP = a 2'-deoxyribonucleoside 5'-triphosphate + ADP. It catalyses the reaction a ribonucleoside 5'-diphosphate + ATP = a ribonucleoside 5'-triphosphate + ADP. Functionally, major role in the synthesis of nucleoside triphosphates other than ATP. The ATP gamma phosphate is transferred to the NDP beta phosphate via a ping-pong mechanism, using a phosphorylated active-site intermediate. The chain is Nucleoside diphosphate kinase from Pseudoalteromonas translucida (strain TAC 125).